A 1482-amino-acid polypeptide reads, in one-letter code: Calcium-dependent protein kinase 6 (1482 aa).

2 disordered regions span residues 250 to 320 and 739 to 760; these read TNNY…IRPN and SENF…DDSN. Polar residues predominate over residues 254–264; that stretch reads AHDNNQDSNSY. Residues 277–301 are compositionally biased toward acidic residues; that stretch reads EEDNDTGDTYADNEEDEDNRDDNDD. Residues 302 to 318 show a composition bias toward polar residues; sequence YSQYNQCEVESDTNQIR. Residues 739-748 are compositionally biased toward low complexity; that stretch reads SENFSNNFND. Residues 749–760 show a composition bias toward basic and acidic residues; it reads NKQKSLKNDDSN. 2 EF-hand domains span residues 931–966 and 972–1007; these read IFER…LCYN and VDKK…LLKQ. Residues D985, S987, N989, C991, and D996 each contribute to the Ca(2+) site. One can recognise a Protein kinase domain in the interval 1043 to 1295; the sequence is LSFKKILGCG…AAVLLHHPWF (253 aa). ATP contacts are provided by residues 1049 to 1057 and K1072; that span reads LGCGAFGEV. D1162 serves as the catalytic Proton acceptor. EF-hand domains are found at residues 1338 to 1373, 1376 to 1406, 1407 to 1442, and 1468 to 1482; these read NHVK…AGVK, DINR…RWKN, IDST…NGVN, and KISF…LSTF. D1351, N1353, N1355, S1357, and E1362 together coordinate Ca(2+). Residues D1420, D1422, D1424, Y1426, and D1431 each contribute to the Ca(2+) site.

This sequence belongs to the protein kinase superfamily. Ser/Thr protein kinase family. CDPK subfamily. Mg(2+) is required as a cofactor.

It catalyses the reaction L-seryl-[protein] + ATP = O-phospho-L-seryl-[protein] + ADP + H(+). The enzyme catalyses L-threonyl-[protein] + ATP = O-phospho-L-threonyl-[protein] + ADP + H(+). Activated by calcium. Calcium-dependent protein kinase which acts as a sensor and effector of intracellular Ca(2+) levels. In sporozoites, probably involved in the secretion of the cysteine protease that cleaves circumsporozoite protein CSP, thereby exposing CSP TSR domain, which binds with high affinity to highly sulfated heparan sulfate proteoglycans (HSPGs), resulting in productive invasion of the host hepatocytes. The polypeptide is Calcium-dependent protein kinase 6 (Plasmodium berghei (strain Anka)).